The chain runs to 627 residues: uncharacterized protein (627 aa).

Residues 1 to 20 show a composition bias toward basic and acidic residues; sequence MAKFKKDLTTKNKDTDRLSE. Disordered stretches follow at residues 1–22 and 578–606; these read MAKF…SEEI and LSLG…LLPV. A compositionally biased stretch (acidic residues) spans 582–592; that stretch reads SEEEQGQEETE.

This is an uncharacterized protein from Rickettsia prowazekii (strain Madrid E).